The primary structure comprises 409 residues: Peptidase T (409 aa).

His78 is a binding site for Zn(2+). Asp80 is an active-site residue. Residue Asp140 coordinates Zn(2+). Glu173 functions as the Proton acceptor in the catalytic mechanism. Zn(2+) contacts are provided by Glu174, Asp196, and His379.

This sequence belongs to the peptidase M20B family. Requires Zn(2+) as cofactor.

It is found in the cytoplasm. It catalyses the reaction Release of the N-terminal residue from a tripeptide.. Its function is as follows. Cleaves the N-terminal amino acid of tripeptides. The protein is Peptidase T of Serratia proteamaculans (strain 568).